Consider the following 252-residue polypeptide: 2-succinyl-6-hydroxy-2,4-cyclohexadiene-1-carboxylate synthase (252 aa).

The protein belongs to the AB hydrolase superfamily. MenH family. As to quaternary structure, monomer.

The enzyme catalyses 5-enolpyruvoyl-6-hydroxy-2-succinyl-cyclohex-3-ene-1-carboxylate = (1R,6R)-6-hydroxy-2-succinyl-cyclohexa-2,4-diene-1-carboxylate + pyruvate. The protein operates within quinol/quinone metabolism; 1,4-dihydroxy-2-naphthoate biosynthesis; 1,4-dihydroxy-2-naphthoate from chorismate: step 3/7. It participates in quinol/quinone metabolism; menaquinone biosynthesis. Its function is as follows. Catalyzes a proton abstraction reaction that results in 2,5-elimination of pyruvate from 2-succinyl-5-enolpyruvyl-6-hydroxy-3-cyclohexene-1-carboxylate (SEPHCHC) and the formation of 2-succinyl-6-hydroxy-2,4-cyclohexadiene-1-carboxylate (SHCHC). The sequence is that of 2-succinyl-6-hydroxy-2,4-cyclohexadiene-1-carboxylate synthase from Salmonella schwarzengrund (strain CVM19633).